Reading from the N-terminus, the 135-residue chain is Large ribosomal subunit protein uL18c (135 aa).

Belongs to the universal ribosomal protein uL18 family. As to quaternary structure, part of the 50S ribosomal subunit; contacts the 5S rRNA.

Its subcellular location is the plastid. The protein resides in the chloroplast. In terms of biological role, binds 5S rRNA, forms part of the central protuberance of the 50S subunit. The polypeptide is Large ribosomal subunit protein uL18c (rpl18) (Phaeodactylum tricornutum (strain CCAP 1055/1)).